Reading from the N-terminus, the 163-residue chain is Large ribosomal subunit protein uL11 (163 aa).

The protein belongs to the universal ribosomal protein uL11 family. Part of the ribosomal stalk of the 50S ribosomal subunit. Interacts with L10 and the large rRNA to form the base of the stalk. L10 forms an elongated spine to which L12 dimers bind in a sequential fashion forming a multimeric L10(L12)X complex.

Its function is as follows. Forms part of the ribosomal stalk which helps the ribosome interact with GTP-bound translation factors. The polypeptide is Large ribosomal subunit protein uL11 (Thermococcus onnurineus (strain NA1)).